The following is a 624-amino-acid chain: Chaperone protein HtpG (624 aa).

The segment at 1-336 (MKGQETRGFQ…SNDLPLNVSR (336 aa)) is a; substrate-binding. Positions 337–552 (EILQDSTVTR…ADEMSTQMAK (216 aa)) are b. The tract at residues 553-624 (LFAAAGQSVP…IRRMNQLLVS (72 aa)) is c.

The protein belongs to the heat shock protein 90 family. In terms of assembly, homodimer.

Its subcellular location is the cytoplasm. Functionally, molecular chaperone. Has ATPase activity. The chain is Chaperone protein HtpG from Salmonella choleraesuis (strain SC-B67).